Here is a 464-residue protein sequence, read N- to C-terminus: tRNA modification GTPase MnmE (464 aa).

(6S)-5-formyl-5,6,7,8-tetrahydrofolate contacts are provided by R25, E87, and K130. In terms of domain architecture, TrmE-type G spans 226 to 386; that stretch reads GLSVVLAGQP…LRAELLRIAG (161 aa). N236 lines the K(+) pocket. GTP contacts are provided by residues 236 to 241, 255 to 261, and 280 to 283; these read NVGKSS, TPIAGTT, and DTAG. S240 contacts Mg(2+). T255, I257, and T260 together coordinate K(+). Position 261 (T261) interacts with Mg(2+). K464 provides a ligand contact to (6S)-5-formyl-5,6,7,8-tetrahydrofolate.

This sequence belongs to the TRAFAC class TrmE-Era-EngA-EngB-Septin-like GTPase superfamily. TrmE GTPase family. Homodimer. Heterotetramer of two MnmE and two MnmG subunits. It depends on K(+) as a cofactor.

It localises to the cytoplasm. Exhibits a very high intrinsic GTPase hydrolysis rate. Involved in the addition of a carboxymethylaminomethyl (cmnm) group at the wobble position (U34) of certain tRNAs, forming tRNA-cmnm(5)s(2)U34. The chain is tRNA modification GTPase MnmE from Burkholderia ambifaria (strain ATCC BAA-244 / DSM 16087 / CCUG 44356 / LMG 19182 / AMMD) (Burkholderia cepacia (strain AMMD)).